Reading from the N-terminus, the 161-residue chain is MTTTPTTRNARQAKILEILDRTRVTSQVQLSELLLDEGIDITQATLSRDLDELGAKKVKRDGGRSFYVVGGELEQFEDQLNGPREKLRRMLDELVVSHDFSGNIAMLRTPAGAAQYLASFIDRVGLPDVVGCIAGDDTIFVLAREGLGGRELAEKLTSRGI.

Belongs to the ArgR family.

It localises to the cytoplasm. It participates in amino-acid biosynthesis; L-arginine biosynthesis [regulation]. Functionally, regulates arginine biosynthesis genes. In Corynebacterium aurimucosum (strain ATCC 700975 / DSM 44827 / CIP 107346 / CN-1) (Corynebacterium nigricans), this protein is Arginine repressor.